The following is a 488-amino-acid chain: SAGA complex subunit HFI1 (488 aa).

2 disordered regions span residues M1–N58 and Q352–I383. Residues A37–N58 show a composition bias toward polar residues.

Component of the 1.8 MDa SAGA (Spt-Ada-Gcn5 acetyltransferase) complex, which is composed of 19 subunits TRA1, SPT7, TAF5, NGG1/ADA3, SGF73, SPT20/ADA5, SPT8, TAF12, TAF6, HFI1/ADA1, UBP8, GCN5, ADA2, SPT3, SGF29, TAF10, TAF9, SGF11 and SUS1. The SAGA complex is composed of 4 modules, namely the HAT (histone acetyltransferase) module (GCN5, ADA2, NGG1/ADA3 and SGF29), the DUB (deubiquitinating) module (UBP8, SGF11, SGF73 and SUS1), the core or TAF (TBP-associated factor) module (TAF5, TAF6, TAF9, TAF10 and TAF12), and the Tra1 or SPT (Suppressor of Ty) module (TRA1, HFI1/ADA1, SPT3, SPT7, SPT8 and SPT20/ADA5). The Tra1/SPT module binds activators, the core module recruits TBP (TATA-binding protein), the HAT module contains the histone H3 acetyltransferase GCN5, and the DUB module comprises the histone H2B deubiquitinase UBP8. Also identified in an altered form of SAGA, named SALSA (SAGA altered, Spt8 absent) or SLIK (SAGA-like) complex, which contains a C-terminal truncated form of SPT7 and is missing SPT8. However, it has been shown that the SAGA and SAGA-like SALSA/SLIK transcriptional coactivators are structurally and biochemically equivalent. Component of an ADA/GCN5 complex that consists of HFI1/ADA1, ADA2, NGG1/ADA3, SPT20/ADA5 and GCN5 and probably is a subcomplex of SAGA.

The protein resides in the nucleus. Its function is as follows. Component of the transcription coactivator SAGA complex. SAGA acts as a general cofactor required for essentially all RNA polymerase II transcription. At the promoters, SAGA is required for transcription pre-initiation complex (PIC) recruitment. It influences RNA polymerase II transcriptional activity through different activities such as TBP interaction (via core/TAF module) and promoter selectivity, interaction with transcription activators (via Tra1/SPT module), and chromatin modification through histone acetylation (via HAT module) and deubiquitination (via DUB module). SAGA preferentially acetylates histones H3 (to form H3K9ac, H3K14ac, H3K18ac and H3K23ac) and H2B and deubiquitinates histone H2B. SAGA interacts with DNA via upstream activating sequences (UASs). Also identified in a modified version of SAGA named SALSA or SLIK. The cleavage of SPT7 and the absence of the SPT8 subunit in SLIK neither drive any major conformational differences in its structure compared with SAGA, nor significantly affect HAT, DUB, or DNA-binding activities. This is SAGA complex subunit HFI1 (HFI1) from Saccharomyces cerevisiae (strain ATCC 204508 / S288c) (Baker's yeast).